A 165-amino-acid polypeptide reads, in one-letter code: Lipoprotein signal peptidase (165 aa).

3 consecutive transmembrane segments (helical) span residues 12–32 (WLWVVVAVLIIDLGSKFLILQ), 70–90 (WFFAGIAVGICVVLAVLMYRS), and 102–122 (ALIIGGALGNLFDRLWHGFVV). Active-site residues include Asp123 and Asp141. Residues 137–157 (FNLADSAICIGAALIVLEGFL) traverse the membrane as a helical segment.

The protein belongs to the peptidase A8 family.

The protein resides in the cell inner membrane. The enzyme catalyses Release of signal peptides from bacterial membrane prolipoproteins. Hydrolyzes -Xaa-Yaa-Zaa-|-(S,diacylglyceryl)Cys-, in which Xaa is hydrophobic (preferably Leu), and Yaa (Ala or Ser) and Zaa (Gly or Ala) have small, neutral side chains.. The protein operates within protein modification; lipoprotein biosynthesis (signal peptide cleavage). This protein specifically catalyzes the removal of signal peptides from prolipoproteins. This is Lipoprotein signal peptidase from Klebsiella aerogenes (strain ATCC 13048 / DSM 30053 / CCUG 1429 / JCM 1235 / KCTC 2190 / NBRC 13534 / NCIMB 10102 / NCTC 10006 / CDC 819-56) (Enterobacter aerogenes).